The primary structure comprises 725 residues: Malate synthase G 2 (725 aa).

Acetyl-CoA-binding positions include Val-118, 125-126 (RY), Ser-276, and Arg-313. Arg-340 functions as the Proton acceptor in the catalytic mechanism. Residues Arg-340, Glu-429, and 454-457 (GFLD) each bind glyoxylate. 2 residues coordinate Mg(2+): Glu-429 and Asp-457. Pro-538 is an acetyl-CoA binding site. At Cys-619 the chain carries Cysteine sulfenic acid (-SOH). Residue Asp-633 is the Proton donor of the active site.

Belongs to the malate synthase family. GlcB subfamily. Monomer. The cofactor is Mg(2+).

The protein localises to the cytoplasm. It carries out the reaction glyoxylate + acetyl-CoA + H2O = (S)-malate + CoA + H(+). It participates in carbohydrate metabolism; glyoxylate cycle; (S)-malate from isocitrate: step 2/2. Its function is as follows. Involved in the glycolate utilization. Catalyzes the condensation and subsequent hydrolysis of acetyl-coenzyme A (acetyl-CoA) and glyoxylate to form malate and CoA. In Pseudomonas syringae pv. tomato (strain ATCC BAA-871 / DC3000), this protein is Malate synthase G 2.